The following is a 256-amino-acid chain: N-glycosylase/DNA lyase (256 aa).

3 residues coordinate 8-oxoguanine: Gln-31, Ser-58, and Trp-69. The segment at Thr-125–Leu-184 is helix-hairpin-helix. Catalysis depends on Lys-140, which acts as the Schiff-base intermediate with DNA. 2 residues coordinate 8-oxoguanine: Phe-144 and Pro-170. Residue Asp-172 is part of the active site. 8-oxoguanine contacts are provided by Asp-218 and Trp-222.

Belongs to the archaeal N-glycosylase/DNA lyase (AGOG) family.

It catalyses the reaction 2'-deoxyribonucleotide-(2'-deoxyribose 5'-phosphate)-2'-deoxyribonucleotide-DNA = a 3'-end 2'-deoxyribonucleotide-(2,3-dehydro-2,3-deoxyribose 5'-phosphate)-DNA + a 5'-end 5'-phospho-2'-deoxyribonucleoside-DNA + H(+). Its function is as follows. DNA repair enzyme that is part of the base excision repair (BER) pathway; protects from oxidative damage by removing the major product of DNA oxidation, 8-oxoguanine (GO), from single- and double-stranded DNA substrates. This chain is N-glycosylase/DNA lyase, found in Pyrobaculum aerophilum (strain ATCC 51768 / DSM 7523 / JCM 9630 / CIP 104966 / NBRC 100827 / IM2).